Consider the following 350-residue polypeptide: Purine-rich element-binding protein gamma (350 aa).

2 disordered regions span residues 1–59 and 136–172; these read MERA…GTSE and GHRQEHGQSKEQVSRRRQKHSAPSPPVSVGSEEHPHS. The span at 9 to 27 shows a compositional bias: gly residues; it reads GGGSGGGRGRGGKNVGGPG. Over residues 47 to 59 the composition is skewed to polar residues; the sequence is ASATPNQSGGTSE. A DNA-binding region spans residues 54 to 296; sequence SGGTSEIQEL…GIFLKVSEVR (243 aa). Residues 137–149 show a composition bias toward basic and acidic residues; the sequence is HRQEHGQSKEQVS. A phosphoserine mark is found at S163, S166, and S342.

Belongs to the PUR DNA-binding protein family. In terms of tissue distribution, isoform 1 is expressed in testis. Isoform 2 is expressed in blastocyst and kidney.

It is found in the nucleus. The protein is Purine-rich element-binding protein gamma (Purg) of Mus musculus (Mouse).